We begin with the raw amino-acid sequence, 140 residues long: Nucleoside diphosphate kinase (140 aa).

Residues K11, F59, R87, T93, R104, and N114 each contribute to the ATP site. Residue H117 is the Pros-phosphohistidine intermediate of the active site.

The protein belongs to the NDK family. As to quaternary structure, homotetramer. Mg(2+) is required as a cofactor.

The protein resides in the cytoplasm. The enzyme catalyses a 2'-deoxyribonucleoside 5'-diphosphate + ATP = a 2'-deoxyribonucleoside 5'-triphosphate + ADP. It carries out the reaction a ribonucleoside 5'-diphosphate + ATP = a ribonucleoside 5'-triphosphate + ADP. In terms of biological role, major role in the synthesis of nucleoside triphosphates other than ATP. The ATP gamma phosphate is transferred to the NDP beta phosphate via a ping-pong mechanism, using a phosphorylated active-site intermediate. In Bradyrhizobium diazoefficiens (strain JCM 10833 / BCRC 13528 / IAM 13628 / NBRC 14792 / USDA 110), this protein is Nucleoside diphosphate kinase.